Here is a 187-residue protein sequence, read N- to C-terminus: Hypoxanthine/guanine phosphoribosyltransferase (187 aa).

Belongs to the purine/pyrimidine phosphoribosyltransferase family. Archaeal HPRT subfamily. In terms of assembly, homodimer.

Its subcellular location is the cytoplasm. The catalysed reaction is IMP + diphosphate = hypoxanthine + 5-phospho-alpha-D-ribose 1-diphosphate. It carries out the reaction GMP + diphosphate = guanine + 5-phospho-alpha-D-ribose 1-diphosphate. Its pathway is purine metabolism; IMP biosynthesis via salvage pathway; IMP from hypoxanthine: step 1/1. Its function is as follows. Catalyzes a salvage reaction resulting in the formation of IMP that is energically less costly than de novo synthesis. This Methanocorpusculum labreanum (strain ATCC 43576 / DSM 4855 / Z) protein is Hypoxanthine/guanine phosphoribosyltransferase.